The following is a 184-amino-acid chain: uncharacterized protein (184 aa).

The Nudix hydrolase domain occupies 36-164 (LRHRATYIVV…TPDSLKALAL (129 aa)). A Nudix box motif is present at residues 73–95 (GGVVQADEQLLESARREAEEELG). Residues E89 and E93 each coordinate Mg(2+).

This sequence belongs to the Nudix hydrolase family. It depends on Mg(2+) as a cofactor.

This is an uncharacterized protein from Salmonella typhi.